The sequence spans 298 residues: MKPIFRRVAVIGKYPGPGAVSASDSARQIIESIAQFVTQQDCELTLEAETAAHTGLTQYHTLDVEGIGRQCDLCLVVGGDGTMLGVGRRLAGYGTPLVGINQGRLGFITDIPLEGYQDALTPILHGDYEEDVRPLMQACVMRGGECVFEALALNDVVVNRGSTSGMVELRVEVDGVFVSNQRADGLIVASPTGSTAYALSAGGPMLHPSIPGWVLVPIAPHTLSNRPIVLSDATEVAIEVAGGRDISANFDMQSLASLQHGDRILVRRSAHRVCFLHPRGWSYFATLRKKLGWYEGGS.

Aspartate 80 (proton acceptor) is an active-site residue. Residues 80–81, 154–155, arginine 182, aspartate 184, 195–200, alanine 219, and glutamine 253 each bind NAD(+); these read DG, ND, and TAYALS.

This sequence belongs to the NAD kinase family. It depends on a divalent metal cation as a cofactor.

The protein resides in the cytoplasm. It carries out the reaction NAD(+) + ATP = ADP + NADP(+) + H(+). Its function is as follows. Involved in the regulation of the intracellular balance of NAD and NADP, and is a key enzyme in the biosynthesis of NADP. Catalyzes specifically the phosphorylation on 2'-hydroxyl of the adenosine moiety of NAD to yield NADP. This is NAD kinase from Acidovorax ebreus (strain TPSY) (Diaphorobacter sp. (strain TPSY)).